Here is a 712-residue protein sequence, read N- to C-terminus: Polyribonucleotide nucleotidyltransferase (712 aa).

Residues Asp487 and Asp493 each coordinate Mg(2+). Residues 554 to 613 enclose the KH domain; that stretch reads PKIITMTINPDKIRDVIGPSGKQINKIIEETGVKIDIEQDGTVFISSINQEMNDKAKKII. The S1 motif domain maps to 623 to 691; that stretch reads GEIYEGKVKR…KQGRVNLSRK (69 aa).

The protein belongs to the polyribonucleotide nucleotidyltransferase family. The cofactor is Mg(2+).

The protein resides in the cytoplasm. The catalysed reaction is RNA(n+1) + phosphate = RNA(n) + a ribonucleoside 5'-diphosphate. In terms of biological role, involved in mRNA degradation. Catalyzes the phosphorolysis of single-stranded polyribonucleotides processively in the 3'- to 5'-direction. The chain is Polyribonucleotide nucleotidyltransferase from Bacillus cereus (strain 03BB102).